The chain runs to 78 residues: Large ribosomal subunit protein bL28 (78 aa).

Belongs to the bacterial ribosomal protein bL28 family.

This is Large ribosomal subunit protein bL28 from Pectobacterium carotovorum subsp. carotovorum (strain PC1).